A 468-amino-acid chain; its full sequence is 6-phospho-beta-galactosidase (468 aa).

D-galactose 6-phosphate is bound by residues Q19, H116, N159, E160, and N297. The Proton donor role is filled by E160. E375 functions as the Nucleophile in the catalytic mechanism. D-galactose 6-phosphate contacts are provided by S428, W429, K435, and Y437.

The protein belongs to the glycosyl hydrolase 1 family.

It carries out the reaction a 6-phospho-beta-D-galactoside + H2O = D-galactose 6-phosphate + an alcohol. Its pathway is carbohydrate metabolism; lactose degradation; D-galactose 6-phosphate and beta-D-glucose from lactose 6-phosphate: step 1/1. The polypeptide is 6-phospho-beta-galactosidase (Streptococcus pyogenes serotype M3 (strain ATCC BAA-595 / MGAS315)).